Reading from the N-terminus, the 249-residue chain is dTDP-4-amino-2,3,4,6-tetradeoxy-D-glucose N,N-dimethyltransferase (249 aa).

Arg-30 is a substrate binding site. Residues Ala-59, Glu-80, and 102–103 (DI) each bind S-adenosyl-L-methionine. Substrate-binding positions include Thr-165, 178 to 182 (RLSHS), and Arg-241.

It belongs to the methyltransferase TylM1/DesVI family. As to quaternary structure, homodimer. Requires Mg(2+) as cofactor.

It carries out the reaction dTDP-4-amino-2,3,4,6-tetradeoxy-alpha-D-erythro-hexopyranose + 2 S-adenosyl-L-methionine = dTDP-alpha-D-forosamine + 2 S-adenosyl-L-homocysteine + 2 H(+). In terms of biological role, involved in the biosynthesis of forosamine ((4-dimethylamino)-2,3,4,6-tetradeoxy-alpha-D-threo-hexopyranose), a highly deoxygenated sugar component of several bioactive natural products such as the insecticidal spinosyns A and D. Catalyzes the dimethylation of the C-4 amino group from dTDP-4-amino-2,3,4,6-tetradeoxy-alpha-D-glucose to yield dTDP-D-forosamine. The chain is dTDP-4-amino-2,3,4,6-tetradeoxy-D-glucose N,N-dimethyltransferase from Saccharopolyspora spinosa.